The following is a 211-amino-acid chain: tRNA (guanine-N(7)-)-methyltransferase (211 aa).

Residues E44, D69, D96, and D118 each coordinate S-adenosyl-L-methionine. D118 is an active-site residue. K122 contributes to the substrate binding site. The tract at residues 124–129 (RHEKRR) is interaction with RNA. Substrate is bound by residues D154 and 191-194 (TEYE).

It belongs to the class I-like SAM-binding methyltransferase superfamily. TrmB family.

It catalyses the reaction guanosine(46) in tRNA + S-adenosyl-L-methionine = N(7)-methylguanosine(46) in tRNA + S-adenosyl-L-homocysteine. Its pathway is tRNA modification; N(7)-methylguanine-tRNA biosynthesis. Catalyzes the formation of N(7)-methylguanine at position 46 (m7G46) in tRNA. The chain is tRNA (guanine-N(7)-)-methyltransferase from Streptococcus mutans serotype c (strain ATCC 700610 / UA159).